The chain runs to 1070 residues: DNA-directed RNA polymerase subunit beta (1070 aa).

This sequence belongs to the RNA polymerase beta chain family. In terms of assembly, in plastids the minimal PEP RNA polymerase catalytic core is composed of four subunits: alpha, beta, beta', and beta''. When a (nuclear-encoded) sigma factor is associated with the core the holoenzyme is formed, which can initiate transcription.

It is found in the plastid. It localises to the chloroplast. It carries out the reaction RNA(n) + a ribonucleoside 5'-triphosphate = RNA(n+1) + diphosphate. In terms of biological role, DNA-dependent RNA polymerase catalyzes the transcription of DNA into RNA using the four ribonucleoside triphosphates as substrates. The chain is DNA-directed RNA polymerase subunit beta from Solanum bulbocastanum (Wild potato).